Consider the following 213-residue polypeptide: tRNA (guanine-N(7)-)-methyltransferase (213 aa).

Positions 44, 69, 96, and 118 each coordinate S-adenosyl-L-methionine. Residue Asp118 is part of the active site. Lys122 contacts substrate. The tract at residues 124–129 is interaction with RNA; that stretch reads RHEKRR. Residues Asp154 and 192–195 each bind substrate; that span reads TEYE.

The protein belongs to the class I-like SAM-binding methyltransferase superfamily. TrmB family.

The enzyme catalyses guanosine(46) in tRNA + S-adenosyl-L-methionine = N(7)-methylguanosine(46) in tRNA + S-adenosyl-L-homocysteine. Its pathway is tRNA modification; N(7)-methylguanine-tRNA biosynthesis. In terms of biological role, catalyzes the formation of N(7)-methylguanine at position 46 (m7G46) in tRNA. This Latilactobacillus sakei subsp. sakei (strain 23K) (Lactobacillus sakei subsp. sakei) protein is tRNA (guanine-N(7)-)-methyltransferase.